A 261-amino-acid chain; its full sequence is MAERYTAENLTFTRSGRTLTDNVSLSLSQGELVTLIGPNGAGKSTLLRLLTGYLKPDSGGCSLAGKALDEWHPQTLSRYRAVMRQQSQPGFDWQVEEIVGMGRAPWTRHPEPSIVREVLQLTGCLPLAGRRYHALSGGEQQRVQLARALAQLGVTERRAAWLFLDEPTSALDLYHQQHLLRLLKSLTRQGHLHACVVLHDLNLAALWSDRILLLHNGRIVSQGIPETVLQADALAHWYGAQVHVGMTSGARRTAGFSRPLA.

The 237-residue stretch at 5–241 (YTAENLTFTR…DALAHWYGAQ (237 aa)) folds into the ABC transporter domain. 37–44 (GPNGAGKS) provides a ligand contact to ATP.

This sequence belongs to the ABC transporter superfamily. Heme (hemin) importer (TC 3.A.1.14.5) family. As to quaternary structure, the complex is composed of two ATP-binding proteins (HmuV), two transmembrane proteins (HmuU) and a solute-binding protein (HmuT).

It localises to the cell inner membrane. Part of the ABC transporter complex HmuTUV involved in hemin import. Responsible for energy coupling to the transport system. This chain is Hemin import ATP-binding protein HmuV, found in Enterobacter cloacae.